The primary structure comprises 135 residues: Peptide methionine sulfoxide reductase MsrB (135 aa).

One can recognise a MsrB domain in the interval 13 to 135 (DADWREQLTP…NGHSMVFEPV (123 aa)). Residues Cys52, Cys55, Cys101, and Cys104 each coordinate Zn(2+). Residue Cys124 is the Nucleophile of the active site.

This sequence belongs to the MsrB Met sulfoxide reductase family. Zn(2+) serves as cofactor.

The catalysed reaction is L-methionyl-[protein] + [thioredoxin]-disulfide + H2O = L-methionyl-(R)-S-oxide-[protein] + [thioredoxin]-dithiol. The sequence is that of Peptide methionine sulfoxide reductase MsrB from Agrobacterium fabrum (strain C58 / ATCC 33970) (Agrobacterium tumefaciens (strain C58)).